A 136-amino-acid polypeptide reads, in one-letter code: ATP synthase epsilon chain (136 aa).

It belongs to the ATPase epsilon chain family. As to quaternary structure, F-type ATPases have 2 components, CF(1) - the catalytic core - and CF(0) - the membrane proton channel. CF(1) has five subunits: alpha(3), beta(3), gamma(1), delta(1), epsilon(1). CF(0) has three main subunits: a, b and c.

It localises to the cell membrane. Functionally, produces ATP from ADP in the presence of a proton gradient across the membrane. This is ATP synthase epsilon chain from Herpetosiphon aurantiacus (strain ATCC 23779 / DSM 785 / 114-95).